The sequence spans 513 residues: Putative ATP-dependent RNA helicase QP509L (513 aa).

The 153-residue stretch at lysine 110–proline 262 folds into the Helicase ATP-binding domain. Position 123–130 (leucine 123–threonine 130) interacts with ATP. The DEAH box signature appears at aspartate 215–histidine 218.

It belongs to the DEAD box helicase family. DEAH subfamily.

It carries out the reaction ATP + H2O = ADP + phosphate + H(+). The chain is Putative ATP-dependent RNA helicase QP509L from African swine fever virus (isolate Tick/South Africa/Pretoriuskop Pr4/1996) (ASFV).